We begin with the raw amino-acid sequence, 969 residues long: Vacuolar membrane protease (969 aa).

Topologically, residues 1–12 (MTRVNSIIGFRP) are cytoplasmic. A helical membrane pass occupies residues 13–33 (IPVTLLTVITYVSLFSALLFI). The Vacuolar segment spans residues 34–381 (DRQPPAVAKK…RAFSVLHLHT (348 aa)). A glycan (N-linked (GlcNAc...) asparagine) is linked at asparagine 125. Residues histidine 166 and aspartate 178 each coordinate Zn(2+). The active-site Proton acceptor is the glutamate 216. Residues glutamate 217, glutamate 242, and histidine 315 each coordinate Zn(2+). Asparagine 355 is a glycosylation site (N-linked (GlcNAc...) asparagine). Residues 382-402 (IFAFTITLIVVPFVVVLVAMW) traverse the membrane as a helical segment. At 403–438 (ALGHFDKLYFFSNTAYIPPPPEHSIASRTTQGWRGV) the chain is on the cytoplasmic side. A helical transmembrane segment spans residues 439–459 (LRFPVAFVAASAGVVGMAFLI). Topologically, residues 460–469 (NKINPMVVYA) are vacuolar. The chain crosses the membrane as a helical span at residues 470–490 (SQYTVWTCFLSTWWIIAWVIL). The Cytoplasmic portion of the chain corresponds to 491–505 (RGADAVRPTALARGY). A helical transmembrane segment spans residues 506–526 (GFLEQWLLWLVAMIGVAISIG). Residues 527 to 531 (KSHLG) lie on the Vacuolar side of the membrane. The chain crosses the membrane as a helical span at residues 532–552 (SGYWVLVFYSGFFTSAFISLL). Residues 553–662 (EMAALQKKSE…WSKDLPSWTW (110 aa)) are Cytoplasmic-facing. The segment at 571 to 629 (DQAYPPEEHSQTGASGNISNRAANDDDDAGEHATEETPLFRGPNRPLSFAPHRNPRYDN) is disordered. The span at 581–592 (QTGASGNISNRA) shows a compositional bias: polar residues. Residues 663–683 (ILQFLATVPLQLVLAGSVALL) form a helical membrane-spanning segment. Topologically, residues 684–698 (LGNALAQTGADGSDM) are vacuolar. A helical transmembrane segment spans residues 699–719 (LTVLLGFGVFSIILLLPVAPF). Residues 720–727 (LHRITYHV) are Cytoplasmic-facing. Residues 728 to 748 (TLFIFVIFVGTFIYNLAAPPF) form a helical membrane-spanning segment. Topologically, residues 749–969 (SPNARLKVYF…LVEGSVPFMI (221 aa)) are vacuolar. The N-linked (GlcNAc...) asparagine glycan is linked to asparagine 840.

This sequence belongs to the peptidase M28 family. Zn(2+) serves as cofactor.

Its subcellular location is the vacuole membrane. Functionally, may be involved in vacuolar sorting and osmoregulation. The chain is Vacuolar membrane protease from Tuber melanosporum (strain Mel28) (Perigord black truffle).